A 608-amino-acid polypeptide reads, in one-letter code: DNA mismatch repair protein MutL (608 aa).

This sequence belongs to the DNA mismatch repair MutL/HexB family.

This protein is involved in the repair of mismatches in DNA. It is required for dam-dependent methyl-directed DNA mismatch repair. May act as a 'molecular matchmaker', a protein that promotes the formation of a stable complex between two or more DNA-binding proteins in an ATP-dependent manner without itself being part of a final effector complex. In Anaeromyxobacter dehalogenans (strain 2CP-C), this protein is DNA mismatch repair protein MutL.